Here is a 394-residue protein sequence, read N- to C-terminus: Phosphoglycerate kinase (394 aa).

Residues Asp21–Asn23, Arg36, His59–Arg62, Arg118, and Arg151 each bind substrate. Ser183 bears the Phosphoserine mark. Residues Lys201 and Gly292 each coordinate ATP. Position 299 is a phosphothreonine (Thr299). ATP is bound by residues Glu323 and Gly350–Ser353.

The protein belongs to the phosphoglycerate kinase family. In terms of assembly, monomer.

Its subcellular location is the cytoplasm. It carries out the reaction (2R)-3-phosphoglycerate + ATP = (2R)-3-phospho-glyceroyl phosphate + ADP. It functions in the pathway carbohydrate degradation; glycolysis; pyruvate from D-glyceraldehyde 3-phosphate: step 2/5. This chain is Phosphoglycerate kinase (pgk), found in Priestia megaterium (strain DSM 319 / IMG 1521) (Bacillus megaterium).